A 126-amino-acid chain; its full sequence is Aspartate 1-decarboxylase (126 aa).

The active-site Schiff-base intermediate with substrate; via pyruvic acid is the Ser-25. Pyruvic acid (Ser) is present on Ser-25. Thr-57 is a substrate binding site. Tyr-58 functions as the Proton donor in the catalytic mechanism. Residue 73-75 (GAA) participates in substrate binding.

Belongs to the PanD family. In terms of assembly, heterooctamer of four alpha and four beta subunits. Pyruvate is required as a cofactor. In terms of processing, is synthesized initially as an inactive proenzyme, which is activated by self-cleavage at a specific serine bond to produce a beta-subunit with a hydroxyl group at its C-terminus and an alpha-subunit with a pyruvoyl group at its N-terminus.

The protein localises to the cytoplasm. The enzyme catalyses L-aspartate + H(+) = beta-alanine + CO2. It functions in the pathway cofactor biosynthesis; (R)-pantothenate biosynthesis; beta-alanine from L-aspartate: step 1/1. Functionally, catalyzes the pyruvoyl-dependent decarboxylation of aspartate to produce beta-alanine. This chain is Aspartate 1-decarboxylase, found in Saccharophagus degradans (strain 2-40 / ATCC 43961 / DSM 17024).